Reading from the N-terminus, the 138-residue chain is Large ribosomal subunit protein uL16 (138 aa).

Over residues 1–16 (MLIPRRVKHRKQHHPG) the composition is skewed to basic residues. Positions 1-24 (MLIPRRVKHRKQHHPGRSGAATGG) are disordered.

Belongs to the universal ribosomal protein uL16 family. As to quaternary structure, part of the 50S ribosomal subunit.

Binds 23S rRNA and is also seen to make contacts with the A and possibly P site tRNAs. The chain is Large ribosomal subunit protein uL16 from Paenarthrobacter aurescens (strain TC1).